The following is a 570-amino-acid chain: Polypeptide N-acetylgalactosaminyltransferase 2 (570 aa).

The Cytoplasmic portion of the chain corresponds to 1–6; that stretch reads MRRRSR. Residues 7–24 traverse the membrane as a helical; Signal-anchor for type II membrane protein segment; sequence MLLCFALLWVLGIAYYMY. Residues 25–570 are Lumenal-facing; it reads SGGGSALAAG…QWKFSLNLQQ (546 aa). O-linked (Xyl...) (chondroitin sulfate) serine glycosylation occurs at S29. Intrachain disulfides connect C125–C353, C344–C422, C455–C472, and C495–C512. The tract at residues 134 to 239 is catalytic subdomain A; the sequence is LPATSVVITF…ERWLEPLLER (106 aa). T142, D175, and R200 together coordinate substrate. D223 contacts Mn(2+). S224 contributes to the substrate binding site. H225 is a Mn(2+) binding site. The tract at residues 299-361 is catalytic subdomain B; it reads PIKTPMIAGG…PCSRVGHVFR (63 aa). W330 is a binding site for substrate. Position 358 (H358) interacts with Mn(2+). Substrate contacts are provided by R361, H364, and Y366. Residues 442–565 form the Ricin B-type lectin domain; sequence QDIAFGALQQ…PALSQQWKFS (124 aa). N-linked (GlcNAc...) asparagine glycosylation is present at N515. S535 carries the post-translational modification Phosphoserine. A disulfide bond links C538 and C554.

This sequence belongs to the glycosyltransferase 2 family. GalNAc-T subfamily. Mn(2+) serves as cofactor. As to expression, widely expressed at high level.

Its subcellular location is the golgi apparatus. It is found in the golgi stack membrane. The protein resides in the secreted. It catalyses the reaction L-seryl-[protein] + UDP-N-acetyl-alpha-D-galactosamine = a 3-O-[N-acetyl-alpha-D-galactosaminyl]-L-seryl-[protein] + UDP + H(+). It carries out the reaction L-threonyl-[protein] + UDP-N-acetyl-alpha-D-galactosamine = a 3-O-[N-acetyl-alpha-D-galactosaminyl]-L-threonyl-[protein] + UDP + H(+). It participates in protein modification; protein glycosylation. In terms of biological role, catalyzes the initial reaction in O-linked oligosaccharide biosynthesis, the transfer of an N-acetyl-D-galactosamine residue to a serine or threonine residue on the protein receptor. Has a broad spectrum of substrates for peptides such as EA2, Muc5AC, Muc1a, Muc1b. Probably involved in O-linked glycosylation of the immunoglobulin A1 (IgA1) hinge region. Involved in O-linked glycosylation of APOC-III, ANGPTL3 and PLTP. It participates in the regulation of HDL-C metabolism. The sequence is that of Polypeptide N-acetylgalactosaminyltransferase 2 (Galnt2) from Mus musculus (Mouse).